Consider the following 369-residue polypeptide: Septin-5 (369 aa).

T13 bears the Phosphothreonine mark. In terms of domain architecture, Septin-type G spans 41-314 (KGFDFTLMVA…ENYRAHCIQQ (274 aa)). Positions 51-58 (GESGLGKS) are G1 motif. GTP contacts are provided by residues 51–58 (GESGLGKS), T85, and G111. The tract at residues 108–111 (DTPG) is G3 motif. Position 168 is an omega-N-methylarginine (R168). The G4 motif stretch occupies residues 189-192 (AKAD). 190–198 (KADCLVPSE) is a binding site for GTP. The residue at position 225 (S225) is a Phosphoserine. GTP contacts are provided by G248 and R263. The residue at position 327 (S327) is a Phosphoserine. A Phosphothreonine modification is found at T336. Residues 338 to 369 (DAETEKLIRMKDEELRRMQEMLQKMKQQMQDQ) are a coiled coil.

Belongs to the TRAFAC class TrmE-Era-EngA-EngB-Septin-like GTPase superfamily. Septin GTPase family. Septins polymerize into heterooligomeric protein complexes that form filaments, and can associate with cellular membranes, actin filaments and microtubules. GTPase activity is required for filament formation. Interacts with SEPTIN2 and SEPTIN5. Interaction with SEPTIN4 not detected. In platelets, associated with a complex containing STX4. Interacts with PRKN; this interaction leads to SEPTIN5 ubiquitination and degradation. Interacts with DYRK1A. Interacts with STX1A; in the cerebellar cortex. Post-translationally, phosphorylated by DYRK1A.

It localises to the cytoplasm. Its subcellular location is the cytoskeleton. Its function is as follows. Filament-forming cytoskeletal GTPase. Involved in cytokinesis (Potential). May play a role in platelet secretion. The polypeptide is Septin-5 (Mus musculus (Mouse)).